A 605-amino-acid chain; its full sequence is Putative glutaminase 2 (605 aa).

The substrate site is built by S213, N262, E308, N315, Y342, Y394, and V412. ANK repeat units follow at residues 480-509 (DRLI…DLNT) and 513-543 (DDRT…DVDK). A compositionally biased stretch (basic and acidic residues) spans 569 to 581 (KAMKRPEQHRKDS). Residues 569 to 605 (KAMKRPEQHRKDSVSSLDTDDEIDDDGFPEKPSFTID) are disordered. Positions 586-595 (DTDDEIDDDG) are enriched in acidic residues.

It belongs to the glutaminase family.

The catalysed reaction is L-glutamine + H2O = L-glutamate + NH4(+). This chain is Putative glutaminase 2 (glna-2), found in Caenorhabditis elegans.